We begin with the raw amino-acid sequence, 214 residues long: Heat shock protein 30 (214 aa).

The sHSP domain maps to 66–183 (VPSSLTIQPV…AERVVPINCS (118 aa)). Residues 193 to 214 (SKTEGSITDTQKKQENTISKED) are disordered. The span at 202–214 (TQKKQENTISKED) shows a compositional bias: basic and acidic residues.

It belongs to the small heat shock protein (HSP20) family.

The chain is Heat shock protein 30 (hsp30) from Oncorhynchus tshawytscha (Chinook salmon).